The sequence spans 466 residues: Membrane-bound lytic murein transglycosylase F (466 aa).

The signal sequence occupies residues 1-24 (MKRFKLNYFIIGLIAILLTWSLWT). The tract at residues 25-268 (TVPWRNAHQD…RLEEKYLGHV (244 aa)) is non-LT domain. Positions 269 to 466 (GGFDYVDTKT…KEKKAAQLAD (198 aa)) are LT domain. Glu313 is a catalytic residue.

The protein in the N-terminal section; belongs to the bacterial solute-binding protein 3 family. It in the C-terminal section; belongs to the transglycosylase Slt family.

The protein localises to the cell outer membrane. The enzyme catalyses Exolytic cleavage of the (1-&gt;4)-beta-glycosidic linkage between N-acetylmuramic acid (MurNAc) and N-acetylglucosamine (GlcNAc) residues in peptidoglycan, from either the reducing or the non-reducing ends of the peptidoglycan chains, with concomitant formation of a 1,6-anhydrobond in the MurNAc residue.. In terms of biological role, murein-degrading enzyme that degrades murein glycan strands and insoluble, high-molecular weight murein sacculi, with the concomitant formation of a 1,6-anhydromuramoyl product. Lytic transglycosylases (LTs) play an integral role in the metabolism of the peptidoglycan (PG) sacculus. Their lytic action creates space within the PG sacculus to allow for its expansion as well as for the insertion of various structures such as secretion systems and flagella. This chain is Membrane-bound lytic murein transglycosylase F, found in Sodalis glossinidius (strain morsitans).